The sequence spans 331 residues: tRNA-cytidine(32) 2-sulfurtransferase (331 aa).

The PP-loop motif signature appears at 71 to 76; it reads SGGKDS. [4Fe-4S] cluster is bound by residues Cys-146, Cys-149, and Cys-237.

The protein belongs to the TtcA family. Homodimer. Requires Mg(2+) as cofactor. It depends on [4Fe-4S] cluster as a cofactor.

It localises to the cytoplasm. It carries out the reaction cytidine(32) in tRNA + S-sulfanyl-L-cysteinyl-[cysteine desulfurase] + AH2 + ATP = 2-thiocytidine(32) in tRNA + L-cysteinyl-[cysteine desulfurase] + A + AMP + diphosphate + H(+). It functions in the pathway tRNA modification. In terms of biological role, catalyzes the ATP-dependent 2-thiolation of cytidine in position 32 of tRNA, to form 2-thiocytidine (s(2)C32). The sulfur atoms are provided by the cysteine/cysteine desulfurase (IscS) system. In Burkholderia multivorans (strain ATCC 17616 / 249), this protein is tRNA-cytidine(32) 2-sulfurtransferase.